A 95-amino-acid chain; its full sequence is Protein IDA-LIKE 2 (95 aa).

The signal sequence occupies residues 1-35 (MSSRNQRSRITSSFFVSFFTRTILLLLILLLGFCN). A disordered region spans residues 75 to 95 (ASGPSRKHNDIGLLSWHRSSP).

Expressed in leaves, buds, flowers, seedlings and seeds. Detected at the base of pedicel, in the floral and funicule abscission zones and in vascular tissues.

The protein localises to the secreted. The protein resides in the extracellular space. May be involved in floral abscission. The chain is Protein IDA-LIKE 2 (IDL2) from Arabidopsis thaliana (Mouse-ear cress).